We begin with the raw amino-acid sequence, 90 residues long: Large ribosomal subunit protein bL27 (90 aa).

A disordered region spans residues M1–G22.

This sequence belongs to the bacterial ribosomal protein bL27 family.

This is Large ribosomal subunit protein bL27 from Coxiella burnetii (strain CbuK_Q154) (Coxiella burnetii (strain Q154)).